The following is a 3133-amino-acid chain: Probable polyketide synthase 38 (3133 aa).

A Ketosynthase family 3 (KS3) domain is found at 9-440 (DDDVAVIGIG…GSNVCLILSE (432 aa)). Catalysis depends on for beta-ketoacyl synthase activity residues Cys181, His320, and His363. The segment at 647-680 (GVSADIIIGHSLGEISSAYCSGMIDFQTLCYLTY) is acyl/malonyl transferase. Ser657 functions as the For acyl/malonyl transferase activity in the catalytic mechanism. The interval 945–1067 (GPSIHSLGNN…GNFSLSKHNI (123 aa)) is N-terminal hotdog fold. Residues 945–1248 (GPSIHSLGNN…CTIVASNPDS (304 aa)) enclose the PKS/mFAS DH domain. His979 acts as the Proton acceptor; for dehydratase activity in catalysis. The segment at 1083–1248 (NFTCISKQDL…CTIVASNPDS (166 aa)) is C-terminal hotdog fold. Residue Asp1155 is the Proton donor; for dehydratase activity of the active site. Residues 1370–1408 (NNNNNNNNNNNNNNNNNNNNNNNNNNNNNNNNNDNDNDN) form a disordered region. In terms of domain architecture, Carrier spans 2562–2639 (NNNEIIRSTI…QSIEIIKSAH (78 aa)). Ser2599 carries the post-translational modification O-(pantetheine 4'-phosphoryl)serine. Residues 2649-2711 (NNNNSNHHDN…NNNNNNNNNN (63 aa)) are a coiled coil. Disordered regions lie at residues 2691 to 2715 (LNNNNNNNNNNNNNNNNNNNNNNNN) and 2794 to 2817 (GNISNDKLNSSNSNSDNSNNNNNQ). 2 stretches are compositionally biased toward low complexity: residues 2692 to 2715 (NNNNNNNNNNNNNNNNNNNNNNNN) and 2795 to 2817 (NISNDKLNSSNSNSDNSNNNNNQ).

Pantetheine 4'-phosphate serves as cofactor.

Its function is as follows. Probable polyketide synthase. This Dictyostelium discoideum (Social amoeba) protein is Probable polyketide synthase 38 (pks38).